Here is a 368-residue protein sequence, read N- to C-terminus: Probable leucine aminopeptidase TRV_05750 (368 aa).

Positions 1–18 (MKVFAIAAVAALTAVAVA) are cleaved as a signal peptide. N92 carries N-linked (GlcNAc...) asparagine glycosylation. Positions 172 and 191 each coordinate Zn(2+). N-linked (GlcNAc...) asparagine glycosylation is found at N192 and N216. E230 and D257 together coordinate Zn(2+). Cysteines 301 and 305 form a disulfide. H334 contributes to the Zn(2+) binding site.

The protein belongs to the peptidase M28 family. M28E subfamily. Monomer. Requires Zn(2+) as cofactor.

The protein localises to the secreted. In terms of biological role, probable extracellular aminopeptidase which contributes to pathogenicity. This Trichophyton verrucosum (strain HKI 0517) protein is Probable leucine aminopeptidase TRV_05750.